The chain runs to 262 residues: Oxidoreductase GME11367 (262 aa).

This sequence belongs to the avfA family.

It participates in secondary metabolite biosynthesis. Functionally, oxidoreductase; part of the gene cluster that mediates the biosynthesis of dibenzodioxocinones such as pestalotiollide B, a novel class of inhibitors against cholesterol ester transfer protein (CEPT). The biosynthesis initiates from condensation of acetate and malonate units catalyzed by the non-reducing PKS pks8/GME11356. Pks8/GME11356 lacks a thioesterase (TE) domain, which is important to the cyclizing of the third ring of atrochrysone carboxylic acid, and the esterase GME11355 might play the role of TE and catalyzes the cyclization reaction of the C ring. The lactamase-like protein GME11357 (or other beta-lactamases in Pestalotiopsis microspora) probably hydrolyzes the thioester bond between the ACP of pks8/GME11356 and the intermediate to release atrochrysone carboxylic acid, which is spontaneously dehydrates to form endocrocin anthrone. Endocrocin anthrone is further converted to emodin via the endocrocin intermediate. Emodin is then oxidized by several enzymes such as the Baeyer-Villiger oxidase GME11358, the oxidoreductase GME11367, the short chain dehydrogenase/reductase GME11373, as well as by other oxidoreductases from the cluster, to modify the A and C rings and open the B ring, and finally yield monodictyphenone. The prenyltransferase GME11375 may catalyze the addition reaction between the C5 side chains and the carbon bone of dibenzodioxocinones. The remaining biochemical reactions to the final product dibenzodioxocinones should be methylation catalyzed by methyltransferase GME11366 and reduction and lactonization reaction catalyzed by a series of oxidordeuctases. The sequence is that of Oxidoreductase GME11367 from Pestalotiopsis microspora.